Reading from the N-terminus, the 158-residue chain is ATP synthase subunit beta, mitochondrial (158 aa).

This sequence belongs to the ATPase alpha/beta chains family. F-type ATPases have 2 components, CF(1) - the catalytic core - and CF(0) - the membrane proton channel. CF(1) has five subunits: alpha(3), beta(3), gamma(1), delta(1), epsilon(1). CF(0) has three main subunits: a, b and c.

It is found in the mitochondrion. The protein resides in the mitochondrion inner membrane. It carries out the reaction ATP + H2O + 4 H(+)(in) = ADP + phosphate + 5 H(+)(out). Its function is as follows. Mitochondrial membrane ATP synthase (F(1)F(0) ATP synthase or Complex V) produces ATP from ADP in the presence of a proton gradient across the membrane which is generated by electron transport complexes of the respiratory chain. F-type ATPases consist of two structural domains, F(1) - containing the extramembraneous catalytic core, and F(0) - containing the membrane proton channel, linked together by a central stalk and a peripheral stalk. During catalysis, ATP synthesis in the catalytic domain of F(1) is coupled via a rotary mechanism of the central stalk subunits to proton translocation. Subunits alpha and beta form the catalytic core in F(1). Rotation of the central stalk against the surrounding alpha(3)beta(3) subunits leads to hydrolysis of ATP in three separate catalytic sites on the beta subunits. This chain is ATP synthase subunit beta, mitochondrial, found in Schizaphis graminum (Green bug aphid).